A 316-amino-acid polypeptide reads, in one-letter code: N-acetyl-gamma-glutamyl-phosphate reductase (316 aa).

Cys136 is a catalytic residue.

It belongs to the NAGSA dehydrogenase family. Type 1 subfamily.

The protein localises to the cytoplasm. The enzyme catalyses N-acetyl-L-glutamate 5-semialdehyde + phosphate + NADP(+) = N-acetyl-L-glutamyl 5-phosphate + NADPH + H(+). The protein operates within amino-acid biosynthesis; L-arginine biosynthesis; N(2)-acetyl-L-ornithine from L-glutamate: step 3/4. Catalyzes the NADPH-dependent reduction of N-acetyl-5-glutamyl phosphate to yield N-acetyl-L-glutamate 5-semialdehyde. The protein is N-acetyl-gamma-glutamyl-phosphate reductase of Xanthomonas axonopodis pv. citri (strain 306).